The sequence spans 1377 residues: MEDIFNFFDKPKDPLHFSAIRISVSSPEKIRERSFGEVKKPETINYRTFKPERDGLFCAKIFGPTKDYECNCGKYKRMKHRGIVCEKCGVEVIPSKVRRERLGHIDLATPVAHIWFLKSLPSRIGNLMDITLKDLEKVLYFEAYVVTDPKNTGMPFAQVFSEDQYQKALEEYGGQFEAGMGAAAIRECLKSMDLDVIADQLRVEMLEATSEAKRKKTAKRLKVVEAFKSSGNKPEWMILECIPVLPPELRPLVPLDGGRFATSDLNDLYRRVINRNNRLKRLMELQAPEVIIRNEKRMLQEAVDALFDNGRRGRAIAGPNKRPLKSLSDMLKGKSGRFRQNLLGKRVDYSGRSVIVVGPELRLHQCGLPKKMALELFKPFIYNKLEEKGYVTTIKSAKKMVEKERPEVWDVLEEVIKEHPVMLNRAPTLHRLGIQAFEPVLIEGKAIQLHPLVCTAFNADFDGDQMAVHLPLSVESQVETRVLMMSTNNILSPAHGKPIIVPSQDMVLGIYYMTRDKYFAKGDGKIFASQEEVRIALDADEVDLQARVKVRLKNLVTDDKPLIVETTPGRVVLREILPDAVPFATINKVMTKKELSNLVDVCYRLAGNKETVILADKLKSIGFRYSTIAGISISINDMVIPEGKPAIIGRASEEVKEIQNQYTEGLITDGERYNKVIDIWAKSTEEIAKEMLDNLSRDIVVAPDGKEVKVPSFNAIHMMADSGSRGSAQQIRQLAGMRGLMAKPSGEIIETPITANFREGLTVLQYFISTHGARKGLADTALKTANSGYLTRRLVDVAQDAIITETDCGTLDGLTVSSLTEGGEVIEHIGDRILGRVALDDILDPVTGDVLVPANEEIDETLVQKIESAGLEKVKIRSVLTCQSRRGICAKCYGRDLARGHLVNMGEAVGVIAAQSIGEPGTQLTMRTFHIGGTASRRAEQTSLEARNEGSIKFININYVTNSEGHHIVMNRNGELAIIDETGREREKYAIVYGAKIKVSPTKLIKQGEALAEWDPYTMPILTEIAGKVKFGDILEGVTMEEQVDEVTGLSRKVVVESRDADKRPRITIKDETGKTAKIHEGTMGRYYLPVGANITVQEDSIVNAGDVIAKIPRETTKTKDITGGLPRVAELFEARKPKDFAVISEIDGVVTFGKDAKGKRKVIVTPDMGEPKEYLIPKGKHISVHEGDHVRAGEALMDGSSNPHDILRVLGQKELAKYLVDEVQEVYRLQGVKINDKHIETIVRQMLRRVRIKEVGDTTLLIDDQLERYIFEDENERVLDKGGRPAIAEPLLLGITKASLSTESFISAASFQETTKVLTQASIEGKVDSLRGLKENVIMGRLIPAGTGLARYRNLKLVVEDSGGVSPQPVEEVSAG.

Residues C70, C72, C85, and C88 each contribute to the Zn(2+) site. Residues D460, D462, and D464 each coordinate Mg(2+). 4 residues coordinate Zn(2+): C808, C882, C889, and C892.

It belongs to the RNA polymerase beta' chain family. In terms of assembly, the RNAP catalytic core consists of 2 alpha, 1 beta, 1 beta' and 1 omega subunit. When a sigma factor is associated with the core the holoenzyme is formed, which can initiate transcription. It depends on Mg(2+) as a cofactor. The cofactor is Zn(2+).

The enzyme catalyses RNA(n) + a ribonucleoside 5'-triphosphate = RNA(n+1) + diphosphate. DNA-dependent RNA polymerase catalyzes the transcription of DNA into RNA using the four ribonucleoside triphosphates as substrates. In Geotalea uraniireducens (strain Rf4) (Geobacter uraniireducens), this protein is DNA-directed RNA polymerase subunit beta'.